Reading from the N-terminus, the 351-residue chain is Ribosomal RNA large subunit methyltransferase M (351 aa).

S-adenosyl-L-methionine contacts are provided by residues serine 186, 219–222 (APGG), aspartate 238, aspartate 258, and aspartate 274. Lysine 303 serves as the catalytic Proton acceptor.

This sequence belongs to the class I-like SAM-binding methyltransferase superfamily. RNA methyltransferase RlmE family. RlmM subfamily. In terms of assembly, monomer.

It is found in the cytoplasm. The catalysed reaction is cytidine(2498) in 23S rRNA + S-adenosyl-L-methionine = 2'-O-methylcytidine(2498) in 23S rRNA + S-adenosyl-L-homocysteine + H(+). Catalyzes the 2'-O-methylation at nucleotide C2498 in 23S rRNA. This is Ribosomal RNA large subunit methyltransferase M from Xylella fastidiosa (strain M12).